The chain runs to 161 residues: Large ribosomal subunit protein bL9 (161 aa).

It belongs to the bacterial ribosomal protein bL9 family.

Its function is as follows. Binds to the 23S rRNA. This is Large ribosomal subunit protein bL9 from Protochlamydia amoebophila (strain UWE25).